We begin with the raw amino-acid sequence, 204 residues long: Proteasome subunit beta (204 aa).

Positions 1-8 (MDDKILEG) are cleaved as a propeptide — removed in mature form; by autocatalysis. Threonine 9 functions as the Nucleophile in the catalytic mechanism.

It belongs to the peptidase T1B family. In terms of assembly, the 20S proteasome core is composed of 14 alpha and 14 beta subunits that assemble into four stacked heptameric rings, resulting in a barrel-shaped structure. The two inner rings, each composed of seven catalytic beta subunits, are sandwiched by two outer rings, each composed of seven alpha subunits. The catalytic chamber with the active sites is on the inside of the barrel. Has a gated structure, the ends of the cylinder being occluded by the N-termini of the alpha-subunits. Is capped at one or both ends by the proteasome regulatory ATPase, PAN.

It is found in the cytoplasm. The catalysed reaction is Cleavage of peptide bonds with very broad specificity.. Its activity is regulated as follows. The formation of the proteasomal ATPase PAN-20S proteasome complex, via the docking of the C-termini of PAN into the intersubunit pockets in the alpha-rings, triggers opening of the gate for substrate entry. Interconversion between the open-gate and close-gate conformations leads to a dynamic regulation of the 20S proteasome proteolysis activity. Functionally, component of the proteasome core, a large protease complex with broad specificity involved in protein degradation. In Methanobrevibacter smithii (strain ATCC 35061 / DSM 861 / OCM 144 / PS), this protein is Proteasome subunit beta.